Reading from the N-terminus, the 415-residue chain is Actin-like protein 7B (415 aa).

The tract at residues 1–35 (MATRNSPMALGTAQGDPGEAGTRPGSDAGLRDTGA) is disordered. Serine 6 carries the post-translational modification Phosphoserine.

Belongs to the actin family.

Its subcellular location is the cytoplasm. It is found in the cytoskeleton. This is Actin-like protein 7B (ACTL7B) from Macaca fascicularis (Crab-eating macaque).